We begin with the raw amino-acid sequence, 299 residues long: Putative ankyrin repeat protein R864 (299 aa).

7 ANK repeats span residues 78–107 (SLNK…NIES), 108–137 (NNNY…NIKS), 139–167 (NNRV…DIRS), 168–197 (NDDY…DIRS), 199–227 (YYYI…DIRA), 228–257 (YNNC…DIRN), and 258–287 (DNDY…DIKT).

In Acanthamoeba polyphaga mimivirus (APMV), this protein is Putative ankyrin repeat protein R864.